A 463-amino-acid chain; its full sequence is Retinoic acid receptor RXR-gamma (463 aa).

Residues 1 to 138 (MYGNYSHFMK…TSPGSLVKHI (138 aa)) form a modulating region. The interval 16–53 (GGSPGHTGSTSMSPSVALPTGKPMDSHPSYTDTPVSAP) is disordered. 2 consecutive NR C4-type zinc fingers follow at residues 139 to 159 (CAICGDRSSGKHYGVYSCEGC) and 175 to 199 (CRDNKDCLIDKRQRNRCQYCRYQKC). The nuclear receptor DNA-binding region spans 139–204 (CAICGDRSSG…RYQKCLVMGM (66 aa)). A hinge region spans residues 205–230 (KREAVQEERQRSRERAESEAECASSS). Basic and acidic residues predominate over residues 211-222 (EERQRSRERAES). The tract at residues 211 to 232 (EERQRSRERAESEAECASSSHE) is disordered. In terms of domain architecture, NR LBD spans 231–459 (HEDMPVERIL…SFLMEMLETP (229 aa)).

This sequence belongs to the nuclear hormone receptor family. NR2 subfamily. Homodimer. Heterodimer with a RAR molecule. Binds DNA preferentially as a RAR/RXR heterodimer. Interacts with RARA. In terms of processing, acetylated by EP300.

It localises to the nucleus. The protein localises to the cytoplasm. Its function is as follows. Receptor for retinoic acid. Retinoic acid receptors bind as heterodimers to their target response elements in response to their ligands, all-trans or 9-cis retinoic acid, and regulate gene expression in various biological processes. The RAR/RXR heterodimers bind to the retinoic acid response elements (RARE) composed of tandem 5'-AGGTCA-3' sites known as DR1-DR5. The high affinity ligand for RXRs is 9-cis retinoic acid. This Mus musculus (Mouse) protein is Retinoic acid receptor RXR-gamma (Rxrg).